Here is a 119-residue protein sequence, read N- to C-terminus: NADH-quinone oxidoreductase subunit A (119 aa).

Helical transmembrane passes span 7–27 (FPVL…MFLG), 63–83 (LIAI…PWGV), and 88–108 (IGWL…VGFV).

The protein belongs to the complex I subunit 3 family. NDH-1 is composed of 14 different subunits. Subunits NuoA, H, J, K, L, M, N constitute the membrane sector of the complex.

It localises to the cell inner membrane. The catalysed reaction is a quinone + NADH + 5 H(+)(in) = a quinol + NAD(+) + 4 H(+)(out). In terms of biological role, NDH-1 shuttles electrons from NADH, via FMN and iron-sulfur (Fe-S) centers, to quinones in the respiratory chain. The immediate electron acceptor for the enzyme in this species is believed to be ubiquinone. Couples the redox reaction to proton translocation (for every two electrons transferred, four hydrogen ions are translocated across the cytoplasmic membrane), and thus conserves the redox energy in a proton gradient. The chain is NADH-quinone oxidoreductase subunit A from Polynucleobacter necessarius subsp. necessarius (strain STIR1).